Consider the following 637-residue polypeptide: Chaperone protein HtpG (637 aa).

The interval 1–338 is a; substrate-binding; that stretch reads MTSTIDKNGA…SADLPLNISR (338 aa). Residues 339-552 are b; that stretch reads EMIQESPILA…ESGPDRQLEK (214 aa). Residues 553-637 form a c region; that stretch reads ILLGVGQLAG…LRRSSAGGGD (85 aa).

It belongs to the heat shock protein 90 family. Homodimer.

The protein localises to the cytoplasm. Molecular chaperone. Has ATPase activity. This is Chaperone protein HtpG from Nitrobacter winogradskyi (strain ATCC 25391 / DSM 10237 / CIP 104748 / NCIMB 11846 / Nb-255).